A 297-amino-acid polypeptide reads, in one-letter code: Heterogeneous nuclear ribonucleoprotein D-like (297 aa).

Positions 1–21 (MTGFGATPDFNEGSKINASKN) are disordered. RRM domains follow at residues 26–108 (GKMF…KGKE) and 111–190 (KKVF…QPKE). The tract at residues 192–224 (YRQQQQKQQKGGRGAATGRGGARGRGRGQGWNQ) is disordered. Over residues 202–222 (GGRGAATGRGGARGRGRGQGW) the composition is skewed to gly residues.

The protein resides in the nucleus. Its subcellular location is the cytoplasm. Functionally, acts as a transcriptional regulator. Binds DNA and RNA. In Xenopus tropicalis (Western clawed frog), this protein is Heterogeneous nuclear ribonucleoprotein D-like (hnrnpdl).